We begin with the raw amino-acid sequence, 383 residues long: tRNA-specific 2-thiouridylase MnmA (383 aa).

ATP-binding positions include 29–36 (GMSGGVDS) and Met55. An interaction with target base in tRNA region spans residues 115 to 117 (NPD). The active-site Nucleophile is Cys120. A disulfide bridge connects residues Cys120 and Cys217. Gly145 is a binding site for ATP. The interaction with tRNA stretch occupies residues 167–169 (KDQ). Cys217 serves as the catalytic Cysteine persulfide intermediate. The segment at 329 to 330 (RY) is interaction with tRNA.

Belongs to the MnmA/TRMU family.

It localises to the cytoplasm. It catalyses the reaction S-sulfanyl-L-cysteinyl-[protein] + uridine(34) in tRNA + AH2 + ATP = 2-thiouridine(34) in tRNA + L-cysteinyl-[protein] + A + AMP + diphosphate + H(+). Functionally, catalyzes the 2-thiolation of uridine at the wobble position (U34) of tRNA, leading to the formation of s(2)U34. In Histophilus somni (strain 129Pt) (Haemophilus somnus), this protein is tRNA-specific 2-thiouridylase MnmA.